The chain runs to 425 residues: Serine hydroxymethyltransferase (425 aa).

Residues Leu-122 and 126-128 contribute to the (6S)-5,6,7,8-tetrahydrofolate site; that span reads GHL. An N6-(pyridoxal phosphate)lysine modification is found at Lys-231. 355–357 serves as a coordination point for (6S)-5,6,7,8-tetrahydrofolate; it reads SPF.

The protein belongs to the SHMT family. Homodimer. Requires pyridoxal 5'-phosphate as cofactor.

Its subcellular location is the cytoplasm. The catalysed reaction is (6R)-5,10-methylene-5,6,7,8-tetrahydrofolate + glycine + H2O = (6S)-5,6,7,8-tetrahydrofolate + L-serine. Its pathway is one-carbon metabolism; tetrahydrofolate interconversion. The protein operates within amino-acid biosynthesis; glycine biosynthesis; glycine from L-serine: step 1/1. Catalyzes the reversible interconversion of serine and glycine with tetrahydrofolate (THF) serving as the one-carbon carrier. This reaction serves as the major source of one-carbon groups required for the biosynthesis of purines, thymidylate, methionine, and other important biomolecules. Also exhibits THF-independent aldolase activity toward beta-hydroxyamino acids, producing glycine and aldehydes, via a retro-aldol mechanism. This Rippkaea orientalis (strain PCC 8801 / RF-1) (Cyanothece sp. (strain PCC 8801)) protein is Serine hydroxymethyltransferase.